The sequence spans 522 residues: Glutamate--cysteine ligase, chloroplastic (522 aa).

Intrachain disulfides connect cysteine 186–cysteine 406 and cysteine 349–cysteine 364.

The protein belongs to the carboxylate-amine ligase family. Glutamate--cysteine ligase type 2 subfamily. In terms of assembly, homodimer or monomer when oxidized or reduced, respectively. Post-translationally, the Cys-186-Cys-406 disulfide bridge is known to modulate the enzyme activity according to the redox status. The oxidized form constitutes the active enzyme. In terms of tissue distribution, abundant in leaves and roots. Expressed to a high level in leaf trichomes of mature plant.

Its subcellular location is the plastid. It is found in the chloroplast. The catalysed reaction is L-cysteine + L-glutamate + ATP = gamma-L-glutamyl-L-cysteine + ADP + phosphate + H(+). Its pathway is sulfur metabolism; glutathione biosynthesis; glutathione from L-cysteine and L-glutamate: step 1/2. Feedback inhibition by glutathione. Inhibited by buthionine sulfoximine and cystamine. Its function is as follows. Seems to play an important role in controlling the expression of resistance responses like the regulation of salicylic acid (SA) and phytoalexin (camalexin) production. Involved in resistance to fungal and bacterial pathogens. Required for the regulation of cell proliferation in root apical meristems through the GSH-dependent developmental pathway. Also participates in the detoxification process, the antioxidant response and is essential for embryo development and proper seed maturation. This Arabidopsis thaliana (Mouse-ear cress) protein is Glutamate--cysteine ligase, chloroplastic (GSH1).